Here is an 842-residue protein sequence, read N- to C-terminus: Protein P (842 aa).

The segment at 1–177 is terminal protein domain (TP); sequence MPLSYQHFRR…FCGSPYTWEQ (177 aa). Residues 178 to 345 form a spacer region; that stretch reads DLQHGAFLDG…YCLSHLVNLL (168 aa). Residues 184 to 238 are disordered; that stretch reads FLDGPSRVGKEPFHQQSSRIPSRSPVGPSIQSKYQQSRLGLQSQKGPLARGQQGR. A compositionally biased stretch (polar residues) spans 212–228; sequence SIQSKYQQSRLGLQSQK. The segment at 346 to 689 is polymerase/reverse transcriptase domain (RT); the sequence is QDWGPCTEHG…YMNLYPVARQ (344 aa). The 244-residue stretch at 356-599 folds into the Reverse transcriptase domain; it reads EYHIRIPRTP…YSLNFMGYVI (244 aa). Mg(2+)-binding residues include Asp428, Asp550, and Asp551.

This sequence belongs to the hepadnaviridae P protein family.

The enzyme catalyses DNA(n) + a 2'-deoxyribonucleoside 5'-triphosphate = DNA(n+1) + diphosphate. It carries out the reaction Endonucleolytic cleavage to 5'-phosphomonoester.. Activated by host HSP70 and HSP40 in vitro to be able to bind the epsilon loop of the pgRNA. Because deletion of the RNase H region renders the protein partly chaperone-independent, the chaperones may be needed indirectly to relieve occlusion of the RNA-binding site by this domain. Inhibited by several reverse-transcriptase inhibitors: Lamivudine, Adefovir and Entecavir. Multifunctional enzyme that converts the viral RNA genome into dsDNA in viral cytoplasmic capsids. This enzyme displays a DNA polymerase activity that can copy either DNA or RNA templates, and a ribonuclease H (RNase H) activity that cleaves the RNA strand of RNA-DNA heteroduplexes in a partially processive 3'- to 5'-endonucleasic mode. Neo-synthesized pregenomic RNA (pgRNA) are encapsidated together with the P protein, and reverse-transcribed inside the nucleocapsid. Initiation of reverse-transcription occurs first by binding the epsilon loop on the pgRNA genome, and is initiated by protein priming, thereby the 5'-end of (-)DNA is covalently linked to P protein. Partial (+)DNA is synthesized from the (-)DNA template and generates the relaxed circular DNA (RC-DNA) genome. After budding and infection, the RC-DNA migrates in the nucleus, and is converted into a plasmid-like covalently closed circular DNA (cccDNA). The activity of P protein does not seem to be necessary for cccDNA generation, and is presumably released from (+)DNA by host nuclear DNA repair machinery. This Hepatitis B virus genotype G (isolate United States/USG17/2002) (HBV-G) protein is Protein P.